Consider the following 386-residue polypeptide: MKIHEYQAKELLRKYGVVTPRGFHTVSVDGAVKAAEELGGKIWVVKAQIHAGGRGKGGGVKLARSLDEVRQHASDILGMQLVTHQTGPEGQKVRNLLIEEGADIQKEYYVAALTDRATQKVAIMASSEGGMDIEEVAHSTPEKILKEFVDPLVGLTDAQAENLARGIGVPEASVAKAVDALKRLYTCYMETDASLAEINPLILEGNGNIKALDAKFNFDSNALYRHPEIVDFRDFDEEDADEIEASKFDLAYISLDGNIGCLVNGAGLAMATMDTIKLFGAEPANFLDVGGGATTEKVTEAFKIMLKNPKVKGILVNIFGGIMKCDTIATGVVAAAKEVNLSVPLVVRMKGTNEDLGKKILAESGLPIIAADTMAEAATKIVAAVK.

Residues 9–244 (KELLRKYGVV…FDEEDADEIE (236 aa)) form the ATP-grasp domain. Residues Lys-46, 53–55 (GRG), Glu-99, Ala-102, and Glu-107 contribute to the ATP site. Mg(2+)-binding residues include Asn-199 and Asp-213. Residues Asn-264 and 321–323 (GIM) contribute to the substrate site.

Belongs to the succinate/malate CoA ligase beta subunit family. Heterotetramer of two alpha and two beta subunits. It depends on Mg(2+) as a cofactor.

The catalysed reaction is succinate + ATP + CoA = succinyl-CoA + ADP + phosphate. The enzyme catalyses GTP + succinate + CoA = succinyl-CoA + GDP + phosphate. It participates in carbohydrate metabolism; tricarboxylic acid cycle; succinate from succinyl-CoA (ligase route): step 1/1. Succinyl-CoA synthetase functions in the citric acid cycle (TCA), coupling the hydrolysis of succinyl-CoA to the synthesis of either ATP or GTP and thus represents the only step of substrate-level phosphorylation in the TCA. The beta subunit provides nucleotide specificity of the enzyme and binds the substrate succinate, while the binding sites for coenzyme A and phosphate are found in the alpha subunit. The chain is Succinate--CoA ligase [ADP-forming] subunit beta from Aromatoleum aromaticum (strain DSM 19018 / LMG 30748 / EbN1) (Azoarcus sp. (strain EbN1)).